We begin with the raw amino-acid sequence, 459 residues long: Vitronectin (459 aa).

The signal sequence occupies residues 1-19; the sequence is MAPLRPLLMLALLAWVALA. One can recognise an SMB domain in the interval 20–63; the sequence is DQESCKGRCTDGFIAERKCQCDELCSYYQSCCTDYVAECKPQVT. 7 cysteine pairs are disulfide-bonded: Cys24–Cys28, Cys24–Cys40, Cys28–Cys58, Cys38–Cys40, Cys38–Cys51, Cys44–Cys50, and Cys51–Cys58. The Cell attachment site motif lies at 64-66; that stretch reads RGD. A sulfotyrosine mark is found at Tyr75, Tyr78, and Tyr80. Asn87 and Asn146 each carry an N-linked (GlcNAc...) asparagine glycan. 3 Hemopexin repeats span residues 135-179, 180-227, and 228-285; these read GKPF…VWGI, KGPI…FKGI, and PDDV…FALM. A phosphoserine mark is found at Ser289 and Ser378. The tract at residues 338-380 is disordered; sequence LKPSQPKMTKSARRSGKRYRSRRGRGRGRGHSRSQKSHRQSRS. The segment covering 347–378 has biased composition (basic residues); sequence KSARRSGKRYRSRRGRGRGRGHSRSQKSHRQS. 2 positions are modified to sulfotyrosine: Tyr398 and Tyr401. Residues 400-453 form a Hemopexin 4 repeat; the sequence is DYKMDWLVPATCEPIQSVYFFSGEEYYRVNLRTQRVDTVTPPYPRSIAQYWLGC.

In terms of assembly, monomer. Interacts with SERPINE1/PAI1 and C1QBP. In terms of processing, sulfated on tyrosine residues. N- and O-glycosylated. Post-translationally, it has been suggested that the active SMB domain may be permitted considerable disulfide bond heterogeneity or variability, thus two alternate disulfide patterns based on 3D structures are described with 1 disulfide bond conserved in both. In terms of tissue distribution, plasma.

The protein localises to the secreted. It localises to the extracellular space. In terms of biological role, vitronectin is a cell adhesion and spreading factor found in serum and tissues. Vitronectin interact with glycosaminoglycans and proteoglycans. Is recognized by certain members of the integrin family and serves as a cell-to-substrate adhesion molecule. Inhibitor of the membrane-damaging effect of the terminal cytolytic complement pathway. The chain is Vitronectin (VTN) from Sus scrofa (Pig).